The primary structure comprises 164 residues: R-phycoerythrin alpha chain (164 aa).

2 residues coordinate (2R,3E)-phycoerythrobilin: Cys-82 and Cys-139.

Belongs to the phycobiliprotein family. Heterodimer of an alpha and a beta chain. In terms of processing, contains two covalently linked bilin chromophores.

The protein localises to the plastid. Its subcellular location is the chloroplast thylakoid membrane. Its function is as follows. Light-harvesting photosynthetic bile pigment-protein from the phycobiliprotein complex. This Lophosiphonia boldii (Red alga) protein is R-phycoerythrin alpha chain (cpeA).